The chain runs to 240 residues: uncharacterized protein (240 aa).

A helical transmembrane segment spans residues 73–93; that stretch reads LLGCLYFFIYFVAPTLGPVLF.

This sequence belongs to the universal ribosomal protein uS3 family.

Its subcellular location is the mitochondrion membrane. This is an uncharacterized protein from Arabidopsis thaliana (Mouse-ear cress).